The primary structure comprises 304 residues: Probable intron-encoded endonuclease 1 (304 aa).

In terms of domain architecture, GIY-YIG spans 84–175 (DKGGIYSFIN…RFNFDNLYNF (92 aa)).

To endonucleases of group I introns of fungi and phage.

The protein resides in the mitochondrion. In terms of biological role, mitochondrial DNA endonuclease involved in intron homing. The polypeptide is Probable intron-encoded endonuclease 1 (Neurospora crassa (strain ATCC 24698 / 74-OR23-1A / CBS 708.71 / DSM 1257 / FGSC 987)).